The chain runs to 1770 residues: Vitellogenin (1770 aa).

A signal peptide spans 1-16; sequence MLLLLTLLLFAGTVAA. The Vitellogenin domain maps to 22 to 809; sequence WQVGNEYTYL…SEDSVIPRIL (788 aa). Cysteine 178 and cysteine 222 are joined by a disulfide. N-linked (GlcNAc...) asparagine glycosylation occurs at asparagine 296. Residues 373–394 form a disordered region; the sequence is SSSSSISSSEENDFWQPKPTLE. An N-linked (GlcNAc...) asparagine glycan is attached at asparagine 1067. In terms of domain architecture, VWFD spans 1442 to 1635; the sequence is TSCMLDKTRA…SYALISNQCE (194 aa). 2 disulfide bridges follow: cysteine 1444–cysteine 1598 and cysteine 1466–cysteine 1634.

Accumulates in the hemolymph. Represents up to 70% of the queen's hemolymph proteins. During the first week of the worker adult life, when it becomes a nurse bee and performs brood-rearing tasks, the vitellogenin titer increases and may account for up to 40% of the total hemolymph proteins.

The protein localises to the secreted. Precursor of the egg-yolk proteins that are sources of nutrients during embryonic development. Involved in the differentiation of honeybee larvae into queens. In Apis mellifera (Honeybee), this protein is Vitellogenin (Vg).